A 401-amino-acid polypeptide reads, in one-letter code: L-rhamnonate dehydratase (401 aa).

Substrate-binding residues include histidine 29 and arginine 55. Aspartate 222, glutamate 248, and glutamate 276 together coordinate Mg(2+). Catalysis depends on histidine 325, which acts as the Proton acceptor. Glutamate 345 contacts substrate.

Belongs to the mandelate racemase/muconate lactonizing enzyme family. RhamD subfamily. As to quaternary structure, homooctamer; tetramer of dimers. Mg(2+) serves as cofactor.

The enzyme catalyses L-rhamnonate = 2-dehydro-3-deoxy-L-rhamnonate + H2O. In terms of biological role, catalyzes the dehydration of L-rhamnonate to 2-keto-3-deoxy-L-rhamnonate (KDR). Can also dehydrate L-lyxonate, L-mannonate and D-gulonate, although less efficiently, but not 2-keto-4-hydroxyheptane-1,7-dioate. The chain is L-rhamnonate dehydratase (rhmD) from Escherichia coli (strain K12).